The following is a 92-amino-acid chain: DNA-directed RNA polymerase subunit Rpo11 (92 aa).

This sequence belongs to the archaeal Rpo11/eukaryotic RPB11/RPC19 RNA polymerase subunit family. As to quaternary structure, part of the 13-subunit RNA polymerase complex.

It localises to the cytoplasm. The enzyme catalyses RNA(n) + a ribonucleoside 5'-triphosphate = RNA(n+1) + diphosphate. DNA-dependent RNA polymerase (RNAP) catalyzes the transcription of DNA into RNA using the four ribonucleoside triphosphates as substrates. The polypeptide is DNA-directed RNA polymerase subunit Rpo11 (Saccharolobus shibatae (strain ATCC 51178 / DSM 5389 / JCM 8931 / NBRC 15437 / B12) (Sulfolobus shibatae)).